A 240-amino-acid chain; its full sequence is UDP-2,3-diacylglucosamine hydrolase (240 aa).

Asp7, His9, Asp40, Asn78, and His113 together coordinate Mn(2+). Substrate is bound at residue 78-79 (NR). The substrate site is built by Asp121, Ser159, Lys166, and His194. The Mn(2+) site is built by His194 and His196.

Belongs to the LpxH family. Mn(2+) serves as cofactor.

Its subcellular location is the cell inner membrane. The enzyme catalyses UDP-2-N,3-O-bis[(3R)-3-hydroxytetradecanoyl]-alpha-D-glucosamine + H2O = 2-N,3-O-bis[(3R)-3-hydroxytetradecanoyl]-alpha-D-glucosaminyl 1-phosphate + UMP + 2 H(+). It participates in glycolipid biosynthesis; lipid IV(A) biosynthesis; lipid IV(A) from (3R)-3-hydroxytetradecanoyl-[acyl-carrier-protein] and UDP-N-acetyl-alpha-D-glucosamine: step 4/6. In terms of biological role, hydrolyzes the pyrophosphate bond of UDP-2,3-diacylglucosamine to yield 2,3-diacylglucosamine 1-phosphate (lipid X) and UMP by catalyzing the attack of water at the alpha-P atom. Involved in the biosynthesis of lipid A, a phosphorylated glycolipid that anchors the lipopolysaccharide to the outer membrane of the cell. The polypeptide is UDP-2,3-diacylglucosamine hydrolase (Pseudomonas putida (strain ATCC 700007 / DSM 6899 / JCM 31910 / BCRC 17059 / LMG 24140 / F1)).